A 274-amino-acid chain; its full sequence is Large ribosomal subunit protein uL2 (274 aa).

Disordered regions lie at residues 21–59 (KVGLSKDEPEKSLTSGKKSSGGRNNHGRITTRHRGGGHK) and 224–274 (AMNP…QLKG). Residues 32–42 (SLTSGKKSSGG) show a composition bias toward low complexity. A compositionally biased stretch (basic residues) spans 45-59 (NHGRITTRHRGGGHK). Residues 263 to 274 (KSSDKYIKQLKG) are compositionally biased toward basic and acidic residues.

Belongs to the universal ribosomal protein uL2 family. Part of the 50S ribosomal subunit. Forms a bridge to the 30S subunit in the 70S ribosome.

One of the primary rRNA binding proteins. Required for association of the 30S and 50S subunits to form the 70S ribosome, for tRNA binding and peptide bond formation. It has been suggested to have peptidyltransferase activity; this is somewhat controversial. Makes several contacts with the 16S rRNA in the 70S ribosome. The sequence is that of Large ribosomal subunit protein uL2 from Wolbachia pipientis wMel.